Here is a 159-residue protein sequence, read N- to C-terminus: Large ribosomal subunit protein uL22c (159 aa).

It belongs to the universal ribosomal protein uL22 family. Part of the 50S ribosomal subunit.

It localises to the plastid. The protein resides in the chloroplast. Its function is as follows. This protein binds specifically to 23S rRNA. In terms of biological role, the globular domain of the protein is located near the polypeptide exit tunnel on the outside of the subunit, while an extended beta-hairpin is found that lines the wall of the exit tunnel in the center of the 70S ribosome. In Ipomoea purpurea (Common morning glory), this protein is Large ribosomal subunit protein uL22c (rpl22).